The sequence spans 271 residues: Phosphonoacetaldehyde hydrolase (271 aa).

Residue D12 is the Nucleophile of the active site. D12 and A14 together coordinate Mg(2+). K54 functions as the Schiff-base intermediate with substrate in the catalytic mechanism. Mg(2+) is bound at residue D188.

It belongs to the HAD-like hydrolase superfamily. PhnX family. As to quaternary structure, homodimer. Requires Mg(2+) as cofactor.

It catalyses the reaction phosphonoacetaldehyde + H2O = acetaldehyde + phosphate + H(+). Its function is as follows. Involved in phosphonate degradation. This chain is Phosphonoacetaldehyde hydrolase, found in Vibrio campbellii (strain ATCC BAA-1116).